The chain runs to 270 residues: MRFIPLQTEQQVSCWAAQHIINRINDFKPTAERPFVLGLPTGGTPLKTYQELIRLYQAGKVSFKHVVTFNMDEYVALPEEHPESYHSFMYNNFFNHIDILPENINILNGNTDDHNAECHRYEEKIKSYGKIHLFMGGVGVDGHIAFNEPASSLSSRTRIKTLTQDTLIANSRFFNNDVTQVPKYALTIGVGTLLDAEEVMILATGHQKALAVQAAVEGSINHLWTVSALQMHRHFLLVCDEAAQQELKVKTVKYFTELEGAVAGTDYQGK.

Residue D72 is the Proton acceptor; for enolization step of the active site. The For ring-opening step role is filled by D141. Residue H143 is the Proton acceptor; for ring-opening step of the active site. Residue E148 is the For ring-opening step of the active site.

Belongs to the glucosamine/galactosamine-6-phosphate isomerase family. NagB subfamily. Homohexamer.

The enzyme catalyses alpha-D-glucosamine 6-phosphate + H2O = beta-D-fructose 6-phosphate + NH4(+). Its pathway is amino-sugar metabolism; N-acetylneuraminate degradation; D-fructose 6-phosphate from N-acetylneuraminate: step 5/5. With respect to regulation, allosterically activated by N-acetylglucosamine 6-phosphate (GlcNAc6P). Catalyzes the reversible isomerization-deamination of glucosamine 6-phosphate (GlcN6P) to form fructose 6-phosphate (Fru6P) and ammonium ion. This chain is Glucosamine-6-phosphate deaminase, found in Haemophilus influenzae (strain PittEE).